Consider the following 391-residue polypeptide: Ethanol acetyltransferase 1 (391 aa).

A mitochondrion-targeting transit peptide spans 1–24 (MFFTKVLNNQVANGLKQLPVHKRV). An AB hydrolase-1 domain is found at 48–154 (PIVFVHGIFG…DNSPIEQPHI (107 aa)). Catalysis depends on charge relay system residues serine 121, aspartate 145, and histidine 295.

Belongs to the AB hydrolase superfamily.

It localises to the mitochondrion. The catalysed reaction is ethanol + acetyl-CoA = ethyl acetate + CoA. It catalyses the reaction acetyl-CoA + H2O = acetate + CoA + H(+). The enzyme catalyses ethyl acetate + H2O = ethanol + acetate + H(+). Its activity is regulated as follows. By ethanol. Thioesterase and esterase reactions are highly repressed in the presence of high ethanol concentrations. Functionally, alcohol acetyltransferase that catalyzes the synthesis of ethyl acetate from ethanol and acetyl-CoA. Can also function as a thioesterase by hydrolyzing acetyl-CoA in the absence of ethanol, as well as esterase hydrolyzing ethyl acetate. The polypeptide is Ethanol acetyltransferase 1 (EAT1) (Wickerhamomyces anomalus (strain ATCC 58044 / CBS 1984 / NCYC 433 / NRRL Y-366-8) (Yeast)).